Consider the following 414-residue polypeptide: Tetraspanning orphan receptor (414 aa).

The Cytoplasmic segment spans residues 1 to 28; the sequence is MPRASALLTSDPRHQFTCCLCLHVRTGT. The chain crosses the membrane as a helical span at residues 29–49; sequence IIFGITQIIIQLIFISFLFLM. Topologically, residues 50 to 166 are extracellular; the sequence is TFNPRLFPED…EIKIRQFSPY (117 aa). The helical transmembrane segment at 167–187 threads the bilayer; that stretch reads IAVCVTTFSLAFCCFMVHGAI. Residues 188 to 194 lie on the Cytoplasmic side of the membrane; that stretch reads TRQPTHL. A helical membrane pass occupies residues 195–215; it reads LPFFFIQVFDLIICLIHILGF. The Extracellular portion of the chain corresponds to 216-241; the sequence is MSSTSDIRLMIHTKTGPIYIKSTGLA. A helical transmembrane segment spans residues 242 to 262; it reads FIILSISCMMLAFKAYCLGMV. The Cytoplasmic segment spans residues 263–414; sequence WDCYKYLMLN…TSTPSNVHPC (152 aa). The disordered stretch occupies residues 306 to 328; the sequence is LTGNLDSANESNTRAHPDPVTYD.

Interacts (via N-terminal extracellular domain) with human C2a. Phosphorylated on tyrosine residues.

The protein localises to the cell membrane. Cell surface receptor that binds to human complement C2a protein. This results in inhibition of the classical and lectin pathways of complement activation, probably due to interference with binding of C2a to C4b and interference with cleavage by C1 or MASP2 such that C3 convertase cannot be formed. This infers resistance to complement-mediated cell lysis, allowing parasite survival and infection. In Schistosoma japonicum (Blood fluke), this protein is Tetraspanning orphan receptor.